The chain runs to 246 residues: Apolipoprotein L domain-containing protein 1 (246 aa).

A run of 2 helical transmembrane segments spans residues Ser-50–Leu-72 and Gly-89–Phe-109. Residues Leu-193 to Ser-220 adopt a coiled-coil conformation.

Belongs to the apolipoprotein L family. As to expression, present at low levels in brain vascular cells (at protein level).

The protein localises to the cell membrane. Its subcellular location is the cell junction. It is found in the cytoplasmic vesicle. It localises to the secretory vesicle. In terms of biological role, is a modulator of endothelial barrier permeability, required for proper organization of endothelial cell-cell junctions and cytoskeleton. It also plays a role in the modulation of secretory autophagy. May affect blood-brain barrier permeability. This Rattus norvegicus (Rat) protein is Apolipoprotein L domain-containing protein 1 (Apold1).